A 369-amino-acid chain; its full sequence is Proton-coupled zinc antiporter SLC30A8 (369 aa).

Topologically, residues M1–A79 are cytoplasmic. The segment at P31 to H52 is disordered. Positions V32 to E44 are enriched in basic and acidic residues. The Zn(2+) site is built by H52, C53, and H54. The short motif at H52 to H54 is the HCH Motif; seals regulatory zinc-binding pocket element. Residues I80–V100 traverse the membrane as a helical segment. At V101 to D103 the chain is on the lumenal, vesicle side. A helical membrane pass occupies residues A104–S124. Positions 106, 110, and 137 each coordinate Zn(2+). Topologically, residues S125–E140 are cytoplasmic. The chain crosses the membrane as a helical span at residues I141–L161. Residues A162–A175 lie on the Lumenal, vesicle side of the membrane. Residues T176–L196 form a helical membrane-spanning segment. The Cytoplasmic segment spans residues H197–A217. The helical transmembrane segment at F218 to I238 threads the bilayer. Zn(2+)-binding residues include H220 and D224. Residues Y239–K245 lie on the Lumenal, vesicle side of the membrane. Residues I246–I266 form a helical membrane-spanning segment. Over L267–D369 the chain is Cytoplasmic. Zn(2+) is bound by residues H301, H318, H345, E352, C361, and C364.

It belongs to the cation diffusion facilitator (CDF) transporter (TC 2.A.4) family. SLC30A subfamily. Homodimer. In terms of tissue distribution, in the endocrine pancreas, expressed in insulin-producing beta cells. Expressed at relatively high levels in subcutaneous fat tissue from lean persons; much lower levels in visceral fat, whether from lean or obese individuals, and in subcutaneous fat tissue from obese individuals. Expressed in peripheral blood mononuclear cells, including T-cells and B-cells, with great variation among individuals ranging from negative to strongly positive.

It is found in the cytoplasmic vesicle. The protein resides in the secretory vesicle membrane. It localises to the cell membrane. The enzyme catalyses Zn(2+)(in) + 2 H(+)(out) = Zn(2+)(out) + 2 H(+)(in). Functionally, proton-coupled zinc ion antiporter mediating the entry of zinc into the lumen of pancreatic beta cell secretory granules, thereby regulating insulin secretion. This Homo sapiens (Human) protein is Proton-coupled zinc antiporter SLC30A8.